The chain runs to 558 residues: Arginine--tRNA ligase (558 aa).

The 'HIGH' region motif lies at Ala-134–Gln-144.

Belongs to the class-I aminoacyl-tRNA synthetase family. Monomer.

The protein localises to the cytoplasm. The enzyme catalyses tRNA(Arg) + L-arginine + ATP = L-arginyl-tRNA(Arg) + AMP + diphosphate. This chain is Arginine--tRNA ligase, found in Symbiobacterium thermophilum (strain DSM 24528 / JCM 14929 / IAM 14863 / T).